The following is an 830-amino-acid chain: C-Jun-amino-terminal kinase-interacting protein 2 (830 aa).

Disordered stretches follow at residues 1–26 (MADR…PPQD), 44–354 (CGLG…ADSP), 367–438 (EGSS…PGPC), 452–504 (LWAT…GSTA), and 539–574 (GNDS…PDSP). The segment covering 77 to 105 (DFQEFEMIDDNEEEDDEEEEEEEEEEEDG) has biased composition (acidic residues). Residues 111–278 (AGGGPGSQAL…RMISSISETE (168 aa)) form a JNK-binding domain (JBD) region. Polar residues predominate over residues 142-172 (LHLTTLGAQDSLNNNNGGFTSAPPSSWQETV). 2 stretches are compositionally biased toward low complexity: residues 176–190 (PAQE…PLLP) and 218–227 (ASSGGASPSS). Residues 233–249 (ADLRSHSSGGHEGRRSS) are compositionally biased toward basic and acidic residues. The interval 242–504 (GHEGRRSSQE…PGSRTTGSTA (263 aa)) is necessary for interaction with FGF13. Residues serine 257, serine 304, and serine 307 each carry the phosphoserine modification. Residues 271 to 307 (ISSISETELELSSDGGSSSGRSSHLTNSIEEASSPAS) show a composition bias toward low complexity. Over residues 333–352 (TNSEYESGSESEPDLSEDAD) the composition is skewed to acidic residues. Over residues 427-437 (APRLGPAQPGP) the composition is skewed to low complexity. Acidic residues-rich tracts occupy residues 471–490 (SEEE…DAED) and 541–555 (DSEE…EEEA). The SH3 domain maps to 610-671 (EREQTHRAVF…PAFYAHAVPG (62 aa)). In terms of domain architecture, PID spans 683-819 (PCWVDRFDVQ…FLEYYQEHLA (137 aa)).

It belongs to the JIP scaffold family. As to quaternary structure, forms homo- or heterooligomeric complexes. Binds specific components of the JNK signaling pathway namely JNK1, JNK2, JNK3, MAP2K7, MAP3K10, MAP3K11, MAP3K12 and MAPK13. Also binds the proline-rich domain-containing splice variant of apolipoprotein E receptor 2 (ApoER2). Binds the TPR motif-containing C-terminal of kinesin light chain. Binds the cytoplasmic tails of LRP1 and LRP2 (Megalin). Interacts with DCLK2. Interacts with FGF13; enables the interaction with MAPK13 and may regulate the MAPK8IP2 scaffolding activity. Interacts with TIAM1 and TIAM2. Interacts with SH3RF2. As to expression, highly expressed in brain. Expressed in all neurons. Also expressed in testis, primarily in the epididymal epidermis.

The protein resides in the cytoplasm. Its function is as follows. The JNK-interacting protein (JIP) group of scaffold proteins selectively mediates JNK signaling by aggregating specific components of the MAPK cascade to form a functional JNK signaling module. JIP2 inhibits IL1 beta-induced apoptosis in insulin-secreting cells. This Mus musculus (Mouse) protein is C-Jun-amino-terminal kinase-interacting protein 2 (Mapk8ip2).